We begin with the raw amino-acid sequence, 130 residues long: MSMQDPLADMLTRIRNAQMAEKSVVSMPSSTLKVAVAKVLKDEGYIAGYEVNGEAKPQLSIELKYFEGRPVIEEVKRVSRPGLRQYKSVDDLPKVRGGLGVSIVSTNKGVMTDRAARAAGVGGEVLCTVF.

Belongs to the universal ribosomal protein uS8 family. Part of the 30S ribosomal subunit. Contacts proteins S5 and S12.

Functionally, one of the primary rRNA binding proteins, it binds directly to 16S rRNA central domain where it helps coordinate assembly of the platform of the 30S subunit. This Ectopseudomonas mendocina (strain ymp) (Pseudomonas mendocina) protein is Small ribosomal subunit protein uS8.